A 208-amino-acid polypeptide reads, in one-letter code: 3-isopropylmalate dehydratase small subunit (208 aa).

This sequence belongs to the LeuD family. LeuD type 1 subfamily. As to quaternary structure, heterodimer of LeuC and LeuD.

It carries out the reaction (2R,3S)-3-isopropylmalate = (2S)-2-isopropylmalate. It participates in amino-acid biosynthesis; L-leucine biosynthesis; L-leucine from 3-methyl-2-oxobutanoate: step 2/4. Functionally, catalyzes the isomerization between 2-isopropylmalate and 3-isopropylmalate, via the formation of 2-isopropylmaleate. The chain is 3-isopropylmalate dehydratase small subunit from Gluconobacter oxydans (strain 621H) (Gluconobacter suboxydans).